Here is a 144-residue protein sequence, read N- to C-terminus: 3-hydroxyacyl-[acyl-carrier-protein] dehydratase FabZ (144 aa).

His-51 is an active-site residue.

It belongs to the thioester dehydratase family. FabZ subfamily.

It is found in the cytoplasm. It carries out the reaction a (3R)-hydroxyacyl-[ACP] = a (2E)-enoyl-[ACP] + H2O. Involved in unsaturated fatty acids biosynthesis. Catalyzes the dehydration of short chain beta-hydroxyacyl-ACPs and long chain saturated and unsaturated beta-hydroxyacyl-ACPs. In Clostridium botulinum (strain Loch Maree / Type A3), this protein is 3-hydroxyacyl-[acyl-carrier-protein] dehydratase FabZ.